A 230-amino-acid chain; its full sequence is Somatolactin (230 aa).

A signal peptide spans 1–23; it reads MKKTTVLQVCMVFVVCSLQAVIG. Intrachain disulfides connect Cys-28-Cys-38, Cys-87-Cys-202, and Cys-219-Cys-227. A glycan (N-linked (GlcNAc...) asparagine) is linked at Asn-226.

This sequence belongs to the somatotropin/prolactin family.

It is found in the secreted. The sequence is that of Somatolactin from Carassius auratus (Goldfish).